The following is a 1409-amino-acid chain: DNA-directed RNA polymerase subunit beta' (1409 aa).

Residues Cys-70, Cys-72, Cys-85, and Cys-88 each coordinate Zn(2+). Residues Asp-458, Asp-460, and Asp-462 each contribute to the Mg(2+) site. Zn(2+)-binding residues include Cys-813, Cys-887, Cys-894, and Cys-897.

Belongs to the RNA polymerase beta' chain family. As to quaternary structure, the RNAP catalytic core consists of 2 alpha, 1 beta, 1 beta' and 1 omega subunit. When a sigma factor is associated with the core the holoenzyme is formed, which can initiate transcription. Mg(2+) serves as cofactor. Zn(2+) is required as a cofactor.

The catalysed reaction is RNA(n) + a ribonucleoside 5'-triphosphate = RNA(n+1) + diphosphate. Functionally, DNA-dependent RNA polymerase catalyzes the transcription of DNA into RNA using the four ribonucleoside triphosphates as substrates. The protein is DNA-directed RNA polymerase subunit beta' of Acidovorax ebreus (strain TPSY) (Diaphorobacter sp. (strain TPSY)).